The sequence spans 45 residues: Photosystem II reaction center protein K (45 aa).

The propeptide occupies 1–8 (MELMLLFA). Residues 24 to 44 (LPVIPVLFLALAFVWQASVGF) traverse the membrane as a helical segment.

This sequence belongs to the PsbK family. PSII is composed of 1 copy each of membrane proteins PsbA, PsbB, PsbC, PsbD, PsbE, PsbF, PsbH, PsbI, PsbJ, PsbK, PsbL, PsbM, PsbT, PsbX, PsbY, PsbZ, Psb30/Ycf12, peripheral proteins PsbO, CyanoQ (PsbQ), PsbU, PsbV and a large number of cofactors. It forms dimeric complexes.

It is found in the cellular thylakoid membrane. Functionally, one of the components of the core complex of photosystem II (PSII). PSII is a light-driven water:plastoquinone oxidoreductase that uses light energy to abstract electrons from H(2)O, generating O(2) and a proton gradient subsequently used for ATP formation. It consists of a core antenna complex that captures photons, and an electron transfer chain that converts photonic excitation into a charge separation. The polypeptide is Photosystem II reaction center protein K (Cyanothece sp. (strain PCC 7425 / ATCC 29141)).